The following is a 1217-amino-acid chain: METSSISTVEDKPPQHQVFINFRGADLRRRFVSHLVTALKLNNINVFIDDYEDRGQPLDVLLKRIEESKIVLAIFSGNYTESVWCVRELEKIKDCTDEGTLVAIPIFYKLEPSTVRDLKGKFGDRFRSMAKGDERKKKWKEAFNLIPNIMGIIIDKKSVESEKVNEIVKAVKTALTGIPPEGSHNAVVGALGNSNAGTSSGDKKHETFGNEQRLKDLEEKLDRDKYKGTRIIGVVGMPGIGKTTLLKELYKTWQGKFSRHALIDQIRVKSKHLELDRLPQMLLGELSKLNHPHVDNLKDPYSQLHERKVLVVLDDVSKREQIDALREILDWIKEGKEGSRVVIATSDMSLTNGLVDDTYMVQNLNHRDSLQLFHYHAFIDDQANPQKKDFMKLSEGFVHYARGHPLALKVLGGELNKKSMDHWNSKMKKLAQSPSPNIVSVFQVSYDELTTAQKDAFLDIACFRSQDKDYVESLLASSDLGSAEAMSAVKSLTDKFLINTCDGRVEMHDLLYKFSREVDLKASNQDGSRQRRLWLHQHIIKGGIINVLQNKMKAANVRGIFLDLSEVEDETSLDRDHFINMGNLRYLKFYNSHCPQECKTNNKINIPDKLKLPLKEVRCLHWLKFPLETLPNDFNPINLVDLKLPYSEMEQLWEGDKDTPCLRWVDLNHSSKLCSLSGLSKAEKLQRLNLEGCTTLKAFPHDMKKMKMLAFLNLKGCTSLESLPEMNLISLKTLTLSGCSTFKEFPLISDNIETLYLDGTAISQLPMNMEKLQRLVVLNMKDCKMLEEIPGRVGELKALQELILSDCLNLKIFPEIDISFLNILLLDGTAIEVMPQLPSVQYLCLSRNAKISCLPVGISQLSQLKWLDLKYCTSLTSVPEFPPNLQCLDAHGCSSLKTVSKPLARIMPTEQNHSTFIFTNCENLEQAAKEEITSYAQRKCQLLSYARKRYNGGLVSESLFSTCFPGCEVPSWFCHETVGSELEVKLLPHWHDKKLAGIALCAVVSCLDPQDQVSRLSVTCTFKVKDEDKSWVAYTCPVGSWTRHGGGKDKIELDHVFIGYTSCPHTIKCHEEGNSDECNPTEASLKFTVTGGTSENGKYKVLKCGLSLVYAKDKDKNSALETKYDMLIGKSFQETSEGVDGRVKKTKGKYVMPVEKNFQETTEGVDGRVNKKKKTRMDNGRPKKKQRSGRDDNQTRMQVELQEGNINSVIMHTVKNF.

The 162-residue stretch at 14–175 folds into the TIR domain; sequence PQHQVFINFR…EIVKAVKTAL (162 aa). 23–28 contributes to the NAD(+) binding site; sequence RGADLR. Residues 33 to 34 are important for interaction with RRS1; it reads SH. Glu-88 is a catalytic residue. Residues 211-472 enclose the NB-ARC domain; the sequence is EQRLKDLEEK…FRSQDKDYVE (262 aa). 11 LRR repeats span residues 581 to 606, 614 to 636, 637 to 659, 682 to 706, 708 to 728, 729 to 749, 750 to 774, 796 to 818, 819 to 842, 843 to 860, and 861 to 887; these read MGNL…KINI, LKEV…DFNP, INLV…DKDT, AEKL…MKKM, MLAF…EMNL, ISLK…PLIS, DNIE…KLQR, LKAL…EIDI, SFLN…SVQY, LCLS…GISQ, and LSQL…NLQC. A disordered region spans residues 1161–1195; it reads TTEGVDGRVNKKKKTRMDNGRPKKKQRSGRDDNQT. The short motif at 1170–1177 is the Nuclear localization signal element; the sequence is NKKKKTRM.

It belongs to the disease resistance TIR-NB-LRR family. In terms of assembly, interacts with EDS1. Interacts with SRFR1. Interacts with RRS1.

It localises to the endomembrane system. The protein localises to the cytoplasm. The protein resides in the nucleus. The enzyme catalyses NAD(+) + H2O = ADP-D-ribose + nicotinamide + H(+). In terms of biological role, disease resistance (R) protein that specifically recognizes the AvrRps4 type III effector avirulence protein from P.syringae. Resistance proteins guard the plant against pathogens that contain an appropriate avirulence protein via an indirect interaction with this avirulence protein. That triggers a defense system including the hypersensitive response, which restricts the pathogen growth. Probably acts as a NAD(+) hydrolase (NADase): in response to activation, catalyzes cleavage of NAD(+) into ADP-D-ribose (ADPR) and nicotinamide; NAD(+) cleavage triggering a defense system that promotes cell death. The combined presence of both regular and alternative RPS4 transcripts with truncated open reading frames (ORFs) is necessary for function. RPS4 function is regulated at multiple levels, including gene expression, alternative splicing, and protein stability. When over-expressed, confers temperature-conditioned EDS1-dependent auto-immunity. Heterodimerization with RRS1 is required to form a functional complex to recognize AvrRps4 and PopP2. Abscisic acid deficiency enhances nuclear accumulation of RPS4 and its cell death-inducing activity. The chain is Disease resistance protein RPS4 from Arabidopsis thaliana (Mouse-ear cress).